The sequence spans 551 residues: Cilia- and flagella-associated protein 45 (551 aa).

Disordered stretches follow at residues 1-30 (MPLSTAGILSSSSAASNRSRNKARYRTKAV) and 461-489 (RLEEEKKATGRLQHANELRRQVRENQQKE). A coiled-coil region spans residues 157-526 (NNNKKLSDLE…IKRKKLEELR (370 aa)).

The protein belongs to the CFAP45 family. In terms of assembly, microtubule inner protein component of sperm flagellar doublet microtubules. Interacts with AK8; dimerization with AK8 may create a cavity at the interface of the dimer that can accommodate AMP. Interacts with CFAP52. Interacts with ENKUR. Directly interacts with DNALI1. Interacts with DNAH11. Interacts with DNAI1. In terms of tissue distribution, expressed in respiratory cells and in sperm (at protein level). Expressed in nasopharyngeal epithelium and trachea.

It localises to the cytoplasm. The protein resides in the cytoskeleton. The protein localises to the cilium axoneme. It is found in the flagellum axoneme. Its subcellular location is the cell projection. It localises to the cilium. The protein resides in the flagellum. Functionally, microtubule inner protein (MIP) part of the dynein-decorated doublet microtubules (DMTs) in cilia axoneme, which is required for motile cilia beating. It is an AMP-binding protein that may facilitate dynein ATPase-dependent ciliary and flagellar beating via adenine nucleotide homeostasis. May function as a donor of AMP to AK8 and hence promote ADP production. In Homo sapiens (Human), this protein is Cilia- and flagella-associated protein 45.